The following is a 206-amino-acid chain: 2,3-bisphosphoglycerate-dependent phosphoglycerate mutase (206 aa).

Residues 9 to 16 (RHGQSEWN), 22 to 23 (TG), Arg61, 88 to 91 (ERNY), Lys99, 115 to 116 (RR), and 159 to 160 (GN) contribute to the substrate site. Catalysis depends on His10, which acts as the Tele-phosphohistidine intermediate. Residue Glu88 is the Proton donor/acceptor of the active site.

The protein belongs to the phosphoglycerate mutase family. BPG-dependent PGAM subfamily. In terms of assembly, homodimer.

It catalyses the reaction (2R)-2-phosphoglycerate = (2R)-3-phosphoglycerate. It functions in the pathway carbohydrate degradation; glycolysis; pyruvate from D-glyceraldehyde 3-phosphate: step 3/5. Its function is as follows. Catalyzes the interconversion of 2-phosphoglycerate and 3-phosphoglycerate. The sequence is that of 2,3-bisphosphoglycerate-dependent phosphoglycerate mutase from Bartonella henselae (strain ATCC 49882 / DSM 28221 / CCUG 30454 / Houston 1) (Rochalimaea henselae).